We begin with the raw amino-acid sequence, 252 residues long: Mitochondrial cardiolipin hydrolase (252 aa).

At Met1–Leu4 the chain is on the mitochondrial intermembrane side. The interval Met1–Arg39 is required for mitochondrial localization. The helical transmembrane segment at Ser5–Leu27 threads the bilayer. The Cytoplasmic segment spans residues Arg28–Thr252. The C3H1-type; atypical zinc finger occupies Pro45 to Ser78. The region spanning Asp151–Ala178 is the PLD phosphodiesterase domain. Residues His156, Lys158, and Asp163 contribute to the active site.

This sequence belongs to the phospholipase D family. MitoPLD/Zucchini subfamily. Homodimer. Interacts with MOV10L1. Interacts with MIGA1 and MIGA2; possibly facilitating homodimer formation. Interacts with GK2. As to expression, predominantly expressed in testis and ovary, but not limited to gonads (at protein level). It is also found in brain, heart, pituitary gland, prostate, pancreas, thyroid, bone marrow, lung and muscle.

Its subcellular location is the mitochondrion outer membrane. It localises to the golgi apparatus. The catalysed reaction is a cardiolipin + H2O = a 1,2-diacyl-sn-glycero-3-phospho-(1'-sn-glycerol) + a 1,2-diacyl-sn-glycero-3-phosphate + H(+). Its activity is regulated as follows. MYC stimulates its phospholipase activity. MIGA1 and MIGA2 increase PLD6 self-association affinity and affects the homodimer conformation facilitating its phospholipase activity over the nuclease activity. Single stranded DNA (ssDNA) hydrolase activity does not depend upon, but is stimulated by the presence of Ca(2+) and Mn(2+). Its function is as follows. Presents phospholipase and nuclease activities, depending on the different physiological conditions. Interaction with Mitoguardin (MIGA1 or MIGA2) affects the dimer conformation, facilitating the lipase activity over the nuclease activity. Plays a key role in mitochondrial fusion and fission via its phospholipase activity. In its phospholipase role, it uses the mitochondrial lipid cardiolipin as substrate to generate phosphatidate (PA or 1,2-diacyl-sn-glycero-3-phosphate), a second messenger signaling lipid. Production of PA facilitates Mitofusin-mediated fusion, whereas the cleavage of PA by the Lipin family of phosphatases produces diacylgycerol (DAG) which promotes mitochondrial fission. Both Lipin and DAG regulate mitochondrial dynamics and membrane fusion/fission, important processes for adapting mitochondrial metabolism to changes in cell physiology. Mitochondrial fusion enables cells to cope with the increased nucleotide demand during DNA synthesis. Mitochondrial function and dynamics are closely associated with biological processes such as cell growth, proliferation, and differentiation. Mediator of MYC activity, promotes mitochondrial fusion and activates AMPK which in turn inhibits YAP/TAZ, thereby inducing cell growth and proliferation. The endonuclease activity plays a critical role in PIWI-interacting RNA (piRNA) biogenesis during spermatogenesis. Implicated in spermatogenesis and sperm fertility in testicular germ cells, its single strand-specific nuclease activity is critical for the biogenesis/maturation of PIWI-interacting RNA (piRNA). MOV10L1 selectively binds to piRNA precursors and funnels them to the endonuclease that catalyzes the first cleavage step of piRNA processing to generate piRNA intermediate fragments that are subsequently loaded to Piwi proteins. Cleaves either DNA or RNA substrates with similar affinity, producing a 5' phosphate end, in this way it participates in the processing of primary piRNA transcripts. piRNAs provide essential protection against the activity of mobile genetic elements. piRNA-mediated transposon silencing is thus critical for maintaining genome stability, in particular in germline cells when transposons are mobilized as a consequence of wide-spread genomic demethylation. PA may act as signaling molecule in the recognition/transport of the precursor RNAs of primary piRNAs. Interacts with tesmin in testes, suggesting a role in spermatogenesis via association with its interacting partner. The chain is Mitochondrial cardiolipin hydrolase (PLD6) from Homo sapiens (Human).